The sequence spans 240 residues: uncharacterized protein (240 aa).

Disordered stretches follow at residues 99 to 121 (EPPTVSAPPPPSQFSDEPTSPEL) and 136 to 167 (ATVSSPTSPRPITTESSRVSPTKEKWGRKRVH). A compositionally biased stretch (polar residues) spans 137–155 (TVSSPTSPRPITTESSRVS).

This is an uncharacterized protein from Ictaluridae (bullhead catfishes).